We begin with the raw amino-acid sequence, 99 residues long: A-type ATP synthase subunit F (99 aa).

The protein belongs to the V-ATPase F subunit family. As to quaternary structure, has multiple subunits with at least A(3), B(3), C, D, E, F, H, I and proteolipid K(x).

Its subcellular location is the cell membrane. Component of the A-type ATP synthase that produces ATP from ADP in the presence of a proton gradient across the membrane. This is A-type ATP synthase subunit F from Methanococcoides burtonii (strain DSM 6242 / NBRC 107633 / OCM 468 / ACE-M).